A 592-amino-acid polypeptide reads, in one-letter code: Frizzled-9 (592 aa).

An N-terminal signal peptide occupies residues 1-23 (MAVPPLLRGALLLWQLLATGGAA). At 24 to 230 (LEIGRFDPER…EVFWSRRDKD (207 aa)) the chain is on the extracellular side. An FZ domain is found at 35–156 (RGPAPCQAME…NDPHALCMEA (122 aa)). 5 disulfide bridges follow: C40/C101, C48/C94, C85/C123, C112/C153, and C116/C140. Residues 59-173 (PNLLGHTSQG…PTEPHKGLGM (115 aa)) are required for Wnt-activated receptor activity. Residues 231 to 251 (FALVWMAVWSALCFFSTAFTV) traverse the membrane as a helical segment. Residues 252–267 (FTFLLEPHRFQYPERP) are Cytoplasmic-facing. A helical membrane pass occupies residues 268–288 (IIFLSMCYNVYSLAFLIRAVA). Residues 289 to 314 (GAQSVACDQEAGALYVIQEGLENTGC) are Extracellular-facing. A helical membrane pass occupies residues 315-335 (TLVFLLLYYFGMASSLWWVVL). The Cytoplasmic portion of the chain corresponds to 336-356 (TLTWFLAAGKKWGHEAIEAHG). A helical membrane pass occupies residues 357 to 377 (SYFHMAAWGLPALKTIVVLTL). At 378–401 (RKVAGDELTGLCYVASMDPAALTG) the chain is on the extracellular side. Residues 402-422 (FVLVPLSCYLVLGTSFLLTGF) traverse the membrane as a helical segment. Topologically, residues 423–448 (VALFHIRKIMKTGGTNTEKLEKLMVK) are cytoplasmic. A helical transmembrane segment spans residues 449–469 (IGVFSILYTVPATCVIVCYVY). The Extracellular portion of the chain corresponds to 470–509 (ERLNMDFWRLRATEQPCTAAAVPGGRRDCSLPGGSVPTVA). A helical membrane pass occupies residues 510–530 (VFMLKIFMSLVVGITSGVWVW). Topologically, residues 531-592 (SSKTFQTWQS…DPSLENPTHL (62 aa)) are cytoplasmic. Positions 533–538 (KTFQTW) match the Lys-Thr-X-X-X-Trp motif, mediates interaction with the PDZ domain of Dvl family members motif. Positions 555 to 592 (ACRTPGGYGRGTHCHYKAPTVVLHMTKTDPSLENPTHL) are required for CTNNB1 accumulation and TCF transcription factor activity.

It belongs to the G-protein coupled receptor Fz/Smo family. Post-translationally, ubiquitinated by ZNRF3, leading to its degradation by the proteasome.

The protein localises to the cell membrane. In terms of biological role, receptor for WNT2 that is coupled to the beta-catenin canonical signaling pathway, which leads to the activation of disheveled proteins, inhibition of GSK-3 kinase, nuclear accumulation of beta-catenin and activation of Wnt target genes. Plays a role in neuromuscular junction (NMJ) assembly by negatively regulating the clustering of acetylcholine receptors (AChR) through the beta-catenin canonical signaling pathway. May play a role in neural progenitor cells (NPCs) viability through the beta-catenin canonical signaling pathway by negatively regulating cell cycle arrest leading to inhibition of neuron apoptotic process. During hippocampal development, regulates neuroblast proliferation and apoptotic cell death. Controls bone formation through non canonical Wnt signaling mediated via ISG15. Positively regulates bone regeneration through non canonical Wnt signaling. This chain is Frizzled-9, found in Rattus norvegicus (Rat).